Here is a 1378-residue protein sequence, read N- to C-terminus: Attractin-like protein 1 (1378 aa).

A signal peptide spans 1–51 (MEPGVRARSGAPQPASPVLWRARPAGGGGASSWLLLDGNSWLLCYGFLYLA). The 39-residue stretch at 52 to 90 (LYAQVSQSKPCERTGSCFSGRCVNSTCLCDPGWVGDQCQ) folds into the EGF-like 1 domain. Over 52–1229 (LYAQVSQSKP…FSQHNTIMDL (1178 aa)) the chain is Extracellular. Cystine bridges form between Cys-62–Cys-78, Cys-80–Cys-89, and Cys-92–Cys-118. N-linked (GlcNAc...) asparagine glycosylation occurs at Asn-75. The CUB domain occupies 92–208 (CQGRFKLTEP…TGFNIFYSIN (117 aa)). 2 N-linked (GlcNAc...) asparagine glycosylation sites follow: Asn-173 and Asn-197. The EGF-like 2 domain occupies 206–244 (SINSCPNNCSGHGKCTTSVSVASQVYCECDKYWKGEACD). 3 disulfide bridges follow: Cys-210-Cys-220, Cys-214-Cys-232, and Cys-234-Cys-243. Kelch repeat units follow at residues 315–364 (FMWV…LYQE), 366–414 (IFMY…EGHS), 426–474 (VMIV…SVYD), 479–530 (SIYV…LING), 532–590 (MLIF…VING), and 591–637 (SMYI…WNKN). Asn-379 is a glycosylation site (N-linked (GlcNAc...) asparagine). PSI domains lie at 613 to 656 (NCKA…AKCP), 665 to 708 (RCYR…TKCH), and 714 to 759 (ICNK…DACL). N-linked (GlcNAc...) asparagine glycosylation is present at Asn-703. The C-type lectin domain occupies 754 to 872 (VGDACLRINS…TSMADGLVCE (119 aa)). The cysteines at positions 775 and 871 are disulfide-linked. 2 N-linked (GlcNAc...) asparagine glycosylation sites follow: Asn-777 and Asn-897. PSI domains are found at residues 888–938 (PCSL…ATCS) and 941–1011 (NCSG…IQCP). 8 disulfides stabilise this stretch: Cys-1013–Cys-1021, Cys-1015–Cys-1027, Cys-1030–Cys-1039, Cys-1042–Cys-1056, Cys-1059–Cys-1068, Cys-1061–Cys-1075, Cys-1077–Cys-1087, and Cys-1090–Cys-1105. Laminin EGF-like domains lie at 1013–1058 (CQCN…QCTA) and 1059–1107 (CTCG…TCYY). An N-linked (GlcNAc...) asparagine glycan is attached at Asn-1156. The helical transmembrane segment at 1230 to 1250 (VQFFVTFFSCFLSLLLVAAVV) threads the bilayer. Topologically, residues 1251–1378 (WKIKQTCWAS…HLSTRQGTCV (128 aa)) are cytoplasmic. Residues 1287–1324 (VGAEQTDFLRGPLEGAPKPIAIEPCAGNRAAVLTVFLC) form an interaction with MC4R region. The disordered stretch occupies residues 1351–1378 (QQKPSDNKDKTSGVRNRKHLSTRQGTCV).

As to quaternary structure, interacts with MC4R. In terms of tissue distribution, highly expressed in brain, heart, lung, kidney and liver. In the central nervous system, it is highly expressed in the dentate gyrus, CA1-3 regions of the hippocampus, and the ventral taenia tecta.

The protein resides in the cell membrane. Its function is as follows. May play a role in melanocortin signaling pathways that regulate energy homeostasis. The polypeptide is Attractin-like protein 1 (Atrnl1) (Mus musculus (Mouse)).